We begin with the raw amino-acid sequence, 572 residues long: Ribonuclease Y (572 aa).

The helical transmembrane segment at 1-21 (MPTLYVILSLLLGLIGGVLVQ) threads the bilayer. Disordered stretches follow at residues 59–85 (HEAAEQDRQDAISKTQDAARRVQDAAE) and 110–142 (QLEAEREQAKADAAQQREALSTDRQETRRERED). Basic and acidic residues-rich tracts occupy residues 110–119 (QLEAEREQAK) and 129–142 (LSTDRQETRRERED). A KH domain is found at 262-322 (SVSVVPIPSD…LRREVARHVL (61 aa)). Residues 388–481 (VLKHSVQVAH…VAAADAISAA (94 aa)) form the HD domain.

It belongs to the RNase Y family.

It is found in the cell membrane. Functionally, endoribonuclease that initiates mRNA decay. In Deinococcus radiodurans (strain ATCC 13939 / DSM 20539 / JCM 16871 / CCUG 27074 / LMG 4051 / NBRC 15346 / NCIMB 9279 / VKM B-1422 / R1), this protein is Ribonuclease Y.